The sequence spans 121 residues: Small ribosomal subunit protein uS13 (121 aa).

Positions 94 to 121 (SLPVRGQNTKNNSRTRKGPRRTVANKKK) are disordered. Basic residues predominate over residues 106–121 (SRTRKGPRRTVANKKK).

It belongs to the universal ribosomal protein uS13 family. Part of the 30S ribosomal subunit. Forms a loose heterodimer with protein S19. Forms two bridges to the 50S subunit in the 70S ribosome.

Its function is as follows. Located at the top of the head of the 30S subunit, it contacts several helices of the 16S rRNA. In the 70S ribosome it contacts the 23S rRNA (bridge B1a) and protein L5 of the 50S subunit (bridge B1b), connecting the 2 subunits; these bridges are implicated in subunit movement. Contacts the tRNAs in the A and P-sites. This chain is Small ribosomal subunit protein uS13, found in Exiguobacterium sp. (strain ATCC BAA-1283 / AT1b).